A 131-amino-acid chain; its full sequence is Profilin-5 (131 aa).

A disulfide bridge links Cys-13 with Cys-115. An Involved in PIP2 interaction motif is present at residues 81–97 (VVIRGKKGTGGITIKKT). The residue at position 111 (Thr-111) is a Phosphothreonine.

It belongs to the profilin family. As to quaternary structure, multimer. Occurs in many kinds of cells as a complex with monomeric actin in a 1:1 ratio. Phosphorylated by MAP kinases. Expressed in vegetative tissues. Present in shoots, roots and coleoptiles. Also detected in endosperm and pollen.

It is found in the cytoplasm. It localises to the cytoskeleton. Actin binding is enhanced by calcium Ca(2+). Functionally, binds to actin and affects the structure of the cytoskeleton. At high concentrations, profilin prevents the polymerization of actin, whereas it enhances it at low concentrations. By binding to PIP2, it inhibits the formation of IP3 and DG. Has a high affinity for poly-proline. The sequence is that of Profilin-5 from Zea mays (Maize).